Here is a 506-residue protein sequence, read N- to C-terminus: MSDNIGQINFTIPGIQSLDENDTYLKINHKKTIKICAYAITAIALFFIGGVFFKNQAKINALDAIDEAVLMNKEIAHLREILNKYKATINEDDEFVYQAYDNKNGDSENQLLLMLHKLLKNNANKVNTFDVNNESNKNIDPTYIFRQKLESMQDNIKYASKFFKYMKENNKKYENMDEQLQRFENFKIRYMKTQKHNEMVGKNGLTYVQKVNQYSDFSKEEFDNYFKKLLSVPMDLKSKYIVPLKKHLANTNLISVDNKSKDFPDSRDYRSKFNFLPPKDQGNCGSCWAFAAIGNFEYLYVHTRHEMPISFSEQQMVDCSTENYGCDGGNPFYAFLYMINNGVCLGDEYPYKGHEDFFCLNYRCSLLGRVHFIGDVKPNELIMALNYVGPVTIAVGASEDFVLYSGGVFDGECNPELNHSVLLVGYGQVKKSLAFEDSHSNVDSNLIKKYKENIKGDDDDDIIYYWIVRNSWGPNWGEGGYIRIKRNKAGDDGFCGVGSDVFFPIY.

The Cytoplasmic segment spans residues 1–32 (MSDNIGQINFTIPGIQSLDENDTYLKINHKKT). A propeptide spans 1–262 (MSDNIGQINF…LISVDNKSKD (262 aa)) (activation peptide). A helical; Signal-anchor for type II membrane protein transmembrane segment spans residues 33 to 53 (IKICAYAITAIALFFIGGVFF). Over 54–506 (KNQAKINALD…VGSDVFFPIY (453 aa)) the chain is Lumenal. Asparagine 133 and asparagine 258 each carry an N-linked (GlcNAc...) asparagine glycan. Cystine bridges form between cysteine 284-cysteine 326, cysteine 319-cysteine 359, cysteine 344-cysteine 364, and cysteine 413-cysteine 495. Cysteine 287 is a catalytic residue. Asparagine 418 carries an N-linked (GlcNAc...) asparagine glycan. Residues histidine 419 and asparagine 470 contribute to the active site.

It belongs to the peptidase C1 family.

It localises to the membrane. In terms of biological role, cysteine protease. The chain is Vinckepain-1 from Plasmodium vinckei.